A 156-amino-acid polypeptide reads, in one-letter code: Small ribosomal subunit protein uS7 (156 aa).

Belongs to the universal ribosomal protein uS7 family. In terms of assembly, part of the 30S ribosomal subunit. Contacts proteins S9 and S11.

One of the primary rRNA binding proteins, it binds directly to 16S rRNA where it nucleates assembly of the head domain of the 30S subunit. Is located at the subunit interface close to the decoding center, probably blocks exit of the E-site tRNA. This chain is Small ribosomal subunit protein uS7, found in Methylorubrum extorquens (strain CM4 / NCIMB 13688) (Methylobacterium extorquens).